A 392-amino-acid polypeptide reads, in one-letter code: Ameloblastin (392 aa).

A signal peptide spans 1 to 26; the sequence is MPALKIPLFKMKDMILILCLLKMSSA. Proline 37 bears the Hydroxyproline mark. At serine 43 the chain carries Phosphoserine. Disordered regions lie at residues 86-109, 247-280, and 349-392; these read FPWMRPREHETQQPSLQPQQPGQK, TLEFDSPVAATKGPEKGEGGAQDSPVPEAHLADP, and TTLG…FQEP. Residues 97-109 show a composition bias toward low complexity; it reads QQPSLQPQQPGQK. Residues 359-381 are compositionally biased toward polar residues; that stretch reads VDSTATPDTQHTLMPRNKAQQPQ. The span at 382–392 shows a compositional bias: basic and acidic residues; it reads IKHDAWHFQEP.

Belongs to the ameloblastin family.

The protein localises to the secreted. Its subcellular location is the extracellular space. It is found in the extracellular matrix. Its function is as follows. Involved in the mineralization and structural organization of enamel. The protein is Ameloblastin (AMBN) of Bos taurus (Bovine).